Reading from the N-terminus, the 409-residue chain is Multifunctional CCA protein (409 aa).

2 residues coordinate ATP: glycine 8 and arginine 11. Positions 8 and 11 each coordinate CTP. Residues aspartate 21 and aspartate 23 each contribute to the Mg(2+) site. Positions 91, 137, and 140 each coordinate ATP. CTP-binding residues include arginine 91, arginine 137, and arginine 140. The 102-residue stretch at 228–329 (TGAHTLSVLL…LELLQSFDVF (102 aa)) folds into the HD domain.

The protein belongs to the tRNA nucleotidyltransferase/poly(A) polymerase family. Bacterial CCA-adding enzyme type 1 subfamily. Monomer. Can also form homodimers and oligomers. Mg(2+) is required as a cofactor. The cofactor is Ni(2+).

It catalyses the reaction a tRNA precursor + 2 CTP + ATP = a tRNA with a 3' CCA end + 3 diphosphate. It carries out the reaction a tRNA with a 3' CCA end + 2 CTP + ATP = a tRNA with a 3' CCACCA end + 3 diphosphate. Its function is as follows. Catalyzes the addition and repair of the essential 3'-terminal CCA sequence in tRNAs without using a nucleic acid template. Adds these three nucleotides in the order of C, C, and A to the tRNA nucleotide-73, using CTP and ATP as substrates and producing inorganic pyrophosphate. tRNA 3'-terminal CCA addition is required both for tRNA processing and repair. Also involved in tRNA surveillance by mediating tandem CCA addition to generate a CCACCA at the 3' terminus of unstable tRNAs. While stable tRNAs receive only 3'-terminal CCA, unstable tRNAs are marked with CCACCA and rapidly degraded. This chain is Multifunctional CCA protein, found in Pseudomonas fluorescens (strain ATCC BAA-477 / NRRL B-23932 / Pf-5).